The chain runs to 159 residues: NAD(P)H-quinone oxidoreductase subunit N (159 aa).

It belongs to the complex I NdhN subunit family. In terms of assembly, NDH-1 can be composed of about 15 different subunits; different subcomplexes with different compositions have been identified which probably have different functions.

It localises to the cell inner membrane. The enzyme catalyses a plastoquinone + NADH + (n+1) H(+)(in) = a plastoquinol + NAD(+) + n H(+)(out). It carries out the reaction a plastoquinone + NADPH + (n+1) H(+)(in) = a plastoquinol + NADP(+) + n H(+)(out). NDH-1 shuttles electrons from an unknown electron donor, via FMN and iron-sulfur (Fe-S) centers, to quinones in the respiratory and/or the photosynthetic chain. The immediate electron acceptor for the enzyme in this species is believed to be plastoquinone. Couples the redox reaction to proton translocation, and thus conserves the redox energy in a proton gradient. Cyanobacterial NDH-1 also plays a role in inorganic carbon-concentration. In Gloeobacter violaceus (strain ATCC 29082 / PCC 7421), this protein is NAD(P)H-quinone oxidoreductase subunit N.